The following is a 798-amino-acid chain: ATP-dependent RecD2 DNA helicase (798 aa).

Residue Gly370–Thr374 participates in ATP binding.

It belongs to the RecD family. RecD2 subfamily. In terms of assembly, interacts with SSB (sbbA).

The protein localises to the cytoplasm. It is found in the nucleoid. The enzyme catalyses Couples ATP hydrolysis with the unwinding of duplex DNA at the replication fork by translocating in the 5'-3' direction. This creates two antiparallel DNA single strands (ssDNA). The leading ssDNA polymer is the template for DNA polymerase III holoenzyme which synthesizes a continuous strand.. It carries out the reaction ATP + H2O = ADP + phosphate + H(+). Its function is as follows. In vivo may favor replication restart by preventing RecA from binding to blocked replication forks, avoiding unnecessary recombination during replication restart. Acts as a negative modulator of the RecA-ssDNA filament, may dissasemble RecA threads, can act as both a positive and negative regulator of strand exchange. Probably stabilizes or aids normal replication fork progression, is important for survival after treatment with DNA-damaging agents that can result in replication fork stress. Overcomes the inhibition of replication restart by RecA/RecO, probably by displacing RecA. Increasing levels inhibit PriA-dependent DNA replication initiation (but have little effect on ongoing replication) in vitro; may act by disturbing SsbA assembly. Probably has a role in recombinational DNA repair. Does not seem to contribute to mismatch repair. Has 5'-3' helicase activity that is probably ATP-dependent. The polypeptide is ATP-dependent RecD2 DNA helicase (Bacillus subtilis (strain 168)).